We begin with the raw amino-acid sequence, 443 residues long: ATP-dependent protease ATPase subunit HslU (443 aa).

ATP contacts are provided by residues isoleucine 18, 60–65 (GVGKTE), aspartate 256, glutamate 321, and arginine 393.

It belongs to the ClpX chaperone family. HslU subfamily. A double ring-shaped homohexamer of HslV is capped on each side by a ring-shaped HslU homohexamer. The assembly of the HslU/HslV complex is dependent on binding of ATP.

It is found in the cytoplasm. Its function is as follows. ATPase subunit of a proteasome-like degradation complex; this subunit has chaperone activity. The binding of ATP and its subsequent hydrolysis by HslU are essential for unfolding of protein substrates subsequently hydrolyzed by HslV. HslU recognizes the N-terminal part of its protein substrates and unfolds these before they are guided to HslV for hydrolysis. The sequence is that of ATP-dependent protease ATPase subunit HslU from Salmonella typhi.